A 315-amino-acid polypeptide reads, in one-letter code: DNA-directed RNA polymerase subunit alpha (315 aa).

Residues 1–228 form an alpha N-terminal domain (alpha-NTD) region; it reads MLEIEKPIIE…EHFKLFMSLT (228 aa). The interval 245–315 is alpha C-terminal domain (alpha-CTD); that stretch reads KEKVLEMTVE…LGLCLKLNDE (71 aa).

The protein belongs to the RNA polymerase alpha chain family. In terms of assembly, homodimer. The RNAP catalytic core consists of 2 alpha, 1 beta, 1 beta' and 1 omega subunit. When a sigma factor is associated with the core the holoenzyme is formed, which can initiate transcription.

It catalyses the reaction RNA(n) + a ribonucleoside 5'-triphosphate = RNA(n+1) + diphosphate. DNA-dependent RNA polymerase catalyzes the transcription of DNA into RNA using the four ribonucleoside triphosphates as substrates. This chain is DNA-directed RNA polymerase subunit alpha, found in Clostridium botulinum (strain Alaska E43 / Type E3).